A 228-amino-acid chain; its full sequence is Ribulose-phosphate 3-epimerase, cytoplasmic isoform (228 aa).

Residue S12 participates in substrate binding. 3 residues coordinate a divalent metal cation: H37, D39, and H70. The active-site Proton acceptor is the D39. Substrate-binding positions include H70, 150 to 153, 179 to 181, and 201 to 202; these read GFGG, DGG, and GS. D179 is an a divalent metal cation binding site. D179 serves as the catalytic Proton donor.

Belongs to the ribulose-phosphate 3-epimerase family. As to quaternary structure, homodimer. Co(2+) is required as a cofactor. Fe(2+) serves as cofactor. The cofactor is Mn(2+). It depends on Zn(2+) as a cofactor. As to expression, predominantly accumulates in roots and seedlings.

Its subcellular location is the cytoplasm. It catalyses the reaction D-ribulose 5-phosphate = D-xylulose 5-phosphate. Its pathway is carbohydrate degradation; pentose phosphate pathway; D-xylulose 5-phosphate from D-ribulose 5-phosphate (non-oxidative stage): step 1/1. Its function is as follows. Catalyzes the reversible epimerization of D-ribulose 5-phosphate to D-xylulose 5-phosphate. The polypeptide is Ribulose-phosphate 3-epimerase, cytoplasmic isoform (Oryza sativa subsp. japonica (Rice)).